A 373-amino-acid chain; its full sequence is Probable leucine aminopeptidase 1 (373 aa).

Residues 1–18 (MKLLSVLALSATATSVLG) form the signal peptide. Zn(2+)-binding residues include His-176 and Asp-195. N-linked (GlcNAc...) asparagine glycosylation is present at Asn-196. Residues Glu-234 and Asp-261 each coordinate Zn(2+). N-linked (GlcNAc...) asparagine glycosylation occurs at Asn-288. A disulfide bridge links Cys-310 with Cys-314. His-343 serves as a coordination point for Zn(2+).

Belongs to the peptidase M28 family. M28E subfamily. As to quaternary structure, monomer. The cofactor is Zn(2+).

The protein localises to the secreted. Its function is as follows. Extracellular aminopeptidase which contributes to pathogenicity. This Trichophyton verrucosum (strain HKI 0517) protein is Probable leucine aminopeptidase 1 (LAP1).